Here is a 305-residue protein sequence, read N- to C-terminus: MVKTEKFIQKSVEEIQKEAGNEKVVMALSGGVDSSVCASLAARAIGDRLIPIYIDTGLMRKGETERIKAVFGNIRLQVVDAGDEFVAALAGITDPEKKRKAIGERFIRVFEREAKKSGATCLLQGTIYPDRIESEGGIKSHHNVGGMPEHTAFKKVIEPIRDLYKDEVREVAGALGLPPEIQHRMPFPGPGLAVRILGEVTKEKVAVIREANWIAESEIVEKYRPWQCFAALIGLGTGVKGDNRIHGWIVAVRAVNSRDGMTADPLEIPFADLVRIGSRITAEIPSVARVVYDITPKPPATIEYE.

A GMPS ATP-PPase domain is found at 2–184 (VKTEKFIQKS…LGLPPEIQHR (183 aa)). 29-35 (SGGVDSS) contributes to the ATP binding site.

As to quaternary structure, heterodimer composed of a glutamine amidotransferase subunit (A) and a GMP-binding subunit (B).

The enzyme catalyses XMP + L-glutamine + ATP + H2O = GMP + L-glutamate + AMP + diphosphate + 2 H(+). Its pathway is purine metabolism; GMP biosynthesis; GMP from XMP (L-Gln route): step 1/1. In terms of biological role, catalyzes the synthesis of GMP from XMP. The chain is GMP synthase [glutamine-hydrolyzing] subunit B from Methanoregula boonei (strain DSM 21154 / JCM 14090 / 6A8).